The chain runs to 396 residues: MELDHTPPPSVLNDNCSASYMTPYATVIAMSGLYLLAIFYFCKKSKKMCQPMSDSIYPYQKRLTQLERELKNYLIDEESIEVDDFQIGQTADGFIFRGGVFPKTRNRFNAKVTTAVKISFPIVSKSISLLEDALRLSKLDHPNLIRLLAVSQLSFTVFRPMIALEWLPGGTLADYFQFKVREKDDSERSPIQLKDMLSILYQVSQALKYIHSQLDEFGQELTHGRIFTRNVLVTEPDLRKCEVKLGDFGDAPMGLEYSTPIIAYMPPEILCCAERIPPHRPENDVWMFGVFIWECLTLGAQPHFRKSVEEIKKSFRLPDRGLSCPPTCPLDVWTLVSDCLSEPHMRPRFASTTNASITSRLSELHHIVSPALFLYAIPNQSVCTCIEHHCQSVIHY.

At Met-1 to Tyr-20 the chain is on the extracellular side. N-linked (GlcNAc...) asparagine glycosylation occurs at Asn-15. Residues Met-21–Phe-41 traverse the membrane as a helical segment. At Cys-42–Tyr-396 the chain is on the cytoplasmic side. Residues Glu-81–Val-368 enclose the Protein kinase domain. ATP contacts are provided by residues Ile-87–Ile-95 and Lys-111.

This sequence belongs to the protein kinase superfamily. Tyr protein kinase family. As to expression, expressed in the epidermis of larvae and adults and in vulval and rectal cells.

The protein localises to the membrane. Its function is as follows. Pseudokinase which plays a role in resistance to fungal infection by promoting expression of antimicrobial peptides (nlp-29, nlp-31, nlp-34, cnc-1, cnc-2 and cnc-4) in the epidermis. In addition, up-regulates nlp-29 expression upon physical wounding and in response to phorbol ester PMA treatment. In Caenorhabditis elegans, this protein is Protein nipi-4.